Here is a 215-residue protein sequence, read N- to C-terminus: Ribonuclease HII (215 aa).

Positions 19 to 213 (QTVAGVDEVG…SLRQPSQQID (195 aa)) constitute an RNase H type-2 domain. Residues Asp25, Glu26, and Asp121 each coordinate a divalent metal cation.

It belongs to the RNase HII family. The cofactor is Mn(2+). Requires Mg(2+) as cofactor.

It is found in the cytoplasm. It carries out the reaction Endonucleolytic cleavage to 5'-phosphomonoester.. Functionally, endonuclease that specifically degrades the RNA of RNA-DNA hybrids. This chain is Ribonuclease HII, found in Synechococcus elongatus (strain ATCC 33912 / PCC 7942 / FACHB-805) (Anacystis nidulans R2).